Consider the following 234-residue polypeptide: Peptidase E (234 aa).

Active-site charge relay system residues include Ser-123, Asp-138, and His-160.

This sequence belongs to the peptidase S51 family.

It is found in the cytoplasm. It catalyses the reaction Dipeptidase E catalyzes the hydrolysis of dipeptides Asp-|-Xaa. It does not act on peptides with N-terminal Glu, Asn or Gln, nor does it cleave isoaspartyl peptides.. Functionally, hydrolyzes dipeptides containing N-terminal aspartate residues. May play a role in allowing the cell to use peptide aspartate to spare carbon otherwise required for the synthesis of the aspartate family of amino acids. This is Peptidase E from Actinobacillus pleuropneumoniae serotype 7 (strain AP76).